Reading from the N-terminus, the 217-residue chain is Vacuolar protein-sorting-associated protein 37 homolog 1 (217 aa).

The interval 1 to 49 is disordered; it reads MFNFWGSKDQQQGQSRPQEASSQSPWYSPSLVSSPSSSRPQSSGQISAQ. Polar residues predominate over residues 8-20; sequence KDQQQGQSRPQEA. The segment covering 21–47 has biased composition (low complexity); the sequence is SSQSPWYSPSLVSSPSSSRPQSSGQIS. The VPS37 C-terminal domain occupies 137–217; the sequence is QEKLNELERQ…IHLAAKTSNI (81 aa).

This sequence belongs to the VPS37 family. Component of the endosomal sorting required for transport complex I (ESCRT-I), composed of ELC, VPS28 and VPS37. Interacts with ELC.

The protein resides in the endosome. In terms of biological role, component of the ESCRT-I complex (endosomal sorting complex required for transport I), a regulator of vesicular trafficking process. Required for the sorting of endocytic ubiquitinated cargos into multivesicular bodies (MVBs). This Arabidopsis thaliana (Mouse-ear cress) protein is Vacuolar protein-sorting-associated protein 37 homolog 1 (VPS37-1).